A 1165-amino-acid chain; its full sequence is MRWRLPGARTTLPASVALLLLPILVAPQQLQEHDDLPSTLSVPLSPTQRSFDHHPLPTINVKSNDASALATMALAGPGRAVRARPAQASSSSAGLAPQLHARSLQDWEVEDFVLLATVDGSIHARDRRTGAARWALEVPSSPMVESIYHRANRSSFDRAQPEDDFLWIVEPSQDGNLYIYSPGPDAGLQKLGLTVKELVEQTPYSGTDPAVTYTARKETTLYTVDARTGNILQVFSSRGPITSGHGCRKVDGFDLEAEECDTPSGTLVLGRVEYAVAIQNTETGDPICTLKYSEWTANNRDMDLQSQYFRTMDQSHIYSMHDGVVLGFDHSRMDRPRYTQRFSSPVVRVFDVARPINVESPEAATPLVLLSQPLQPPDPDYGSLDDRDARVFVDCTSAGGWFAMSEETYPLVTGRAKMAQCYEKDYLRHGQPLTSLPTSQQRDALAGVHSLNGPRVVRNTPSISGPSPLELANDTPRELMRSPSELALPPALRHSTIIRKGWDNAVDIFVTILLLFFGAFIYFNSHNIQELAKQKLDVKNIIASYAQPPLSTPSTPVVESTHFKRDSSPSRPISNLTVEVTVPEEQQEGDATPKPKRDRSAVGPDSTPRVKIREPSRGPDSDDDVEELDQAASPEKPKKKARRGRRGGKNHRRGKKPDSEGESKDQADRVVDQVNNLQPQSRLEPDLQLVRTVSNDIIEMDGVLQIGRLRVFSDVVLGHGSHGTVVYRGSFDGRDVAVKRMLVEFYDIASHEVGLLQESDDHNNVIRYFCREQAAGFLYIALELCPASLQDLIERPGDYPQLVQGGLDMPDILRQIIAGVRYLHSLKIVHRDLKPQNILVAMPRGRTGSRSLRLLISDFGLCKKLDDNQSSFRATTAHAAGTSGWRAPELLVDDDNRSAIQGGESQHTESSEPAVVDPQTNRRATRAIDIFSLGCVFYYVLTRGSHPFDKNGKFMREANIVKGNFNLDELQRLGDYAFEADDLIRSMLSLDPRKRLAPLCSSLAFRLFTDLFPRPDASAVLMHPFFWNPSDRLSFLCDVSDHFEFEPRDPPSDALLCLESVACRVMGPEMDFLRLLPKDFKDNLGKQRKYTGSKMLDLLRALRNKRNHYNDMPAHLKAHIGGLPEGYLNFWTVRFPSLLMSCHSVIVELRLTKIDRFKRYFTPVE.

Residues methionine 1–proline 27 form the signal peptide. Residues glutamine 28–asparagine 504 are Lumenal-facing. The N-linked (GlcNAc...) asparagine glycan is linked to asparagine 152. A helical membrane pass occupies residues alanine 505–serine 525. Residues histidine 526–glutamate 1165 are Cytoplasmic-facing. A disordered region spans residues glutamine 547–aspartate 668. 2 stretches are compositionally biased toward basic and acidic residues: residues alanine 591–serine 600 and lysine 611–aspartate 620. Over residues proline 637–lysine 655 the composition is skewed to basic residues. The segment covering lysine 656–aspartate 668 has biased composition (basic and acidic residues). The Protein kinase domain occupies valine 711–phenylalanine 1026. Residues leucine 717–valine 725 and lysine 739 each bind ATP. The active-site Proton acceptor is aspartate 832. A disordered region spans residues alanine 899–glutamine 919. One can recognise a KEN domain in the interval proline 1029–proline 1163.

Belongs to the protein kinase superfamily. Ser/Thr protein kinase family. Homodimer; in response to the accumulation of unfolded proteins. Mg(2+) is required as a cofactor. Post-translationally, autophosphorylated mainly on serine residues.

The protein localises to the membrane. The catalysed reaction is L-seryl-[protein] + ATP = O-phospho-L-seryl-[protein] + ADP + H(+). It catalyses the reaction L-threonyl-[protein] + ATP = O-phospho-L-threonyl-[protein] + ADP + H(+). 8-formyl-7-hydroxy-4-methylcoumarin inhibits the endonuclease activity and prebvent the splicing if the hacA mRNA. The kinase domain is activated by trans-autophosphorylation. Kinase activity is required for activation of the endoribonuclease domain. In terms of biological role, senses unfolded proteins in the lumen of the endoplasmic reticulum (ER) via its N-terminal domain which leads to enzyme auto-activation. The active endoribonuclease domain responds by cleaving an intron from the downstream cytoplasmic mRNA hacA, allowing for the translation of a transcription factor that coordinates a series of adaptive responses that are collectively known as the unfolded protein response (UPR). In the absence of ER stress, ireA controls dual signaling circuits that are both hacA-dependent and hacA-independent and which contribute to the expression of traits that are essential for virulence. The sequence is that of Serine/threonine-protein kinase/endoribonuclease ireA from Aspergillus fumigatus (strain ATCC MYA-4609 / CBS 101355 / FGSC A1100 / Af293) (Neosartorya fumigata).